We begin with the raw amino-acid sequence, 227 residues long: Uracil-DNA glycosylase (227 aa).

Catalysis depends on Asp64, which acts as the Proton acceptor.

Belongs to the uracil-DNA glycosylase (UDG) superfamily. UNG family.

It localises to the cytoplasm. It carries out the reaction Hydrolyzes single-stranded DNA or mismatched double-stranded DNA and polynucleotides, releasing free uracil.. Excises uracil residues from the DNA which can arise as a result of misincorporation of dUMP residues by DNA polymerase or due to deamination of cytosine. This chain is Uracil-DNA glycosylase, found in Sodalis glossinidius (strain morsitans).